A 693-amino-acid chain; its full sequence is Elongation factor G (693 aa).

Residues 8–282 enclose the tr-type G domain; the sequence is EKFRNFGIMA…AVVDYLPSPI (275 aa). Residues 17-24, 81-85, and 135-138 contribute to the GTP site; these read AHIDAGKT, DTPGH, and NKMD.

The protein belongs to the TRAFAC class translation factor GTPase superfamily. Classic translation factor GTPase family. EF-G/EF-2 subfamily.

The protein localises to the cytoplasm. Functionally, catalyzes the GTP-dependent ribosomal translocation step during translation elongation. During this step, the ribosome changes from the pre-translocational (PRE) to the post-translocational (POST) state as the newly formed A-site-bound peptidyl-tRNA and P-site-bound deacylated tRNA move to the P and E sites, respectively. Catalyzes the coordinated movement of the two tRNA molecules, the mRNA and conformational changes in the ribosome. This is Elongation factor G from Mycoplasmoides gallisepticum (strain R(low / passage 15 / clone 2)) (Mycoplasma gallisepticum).